A 260-amino-acid chain; its full sequence is Phosphonates import ATP-binding protein PhnC 2 (260 aa).

The 242-residue stretch at 4–245 folds into the ABC transporter domain; it reads IQINKATKTY…KNTLRTIYQR (242 aa). 37–44 lines the ATP pocket; it reads GPSGAGKS.

Belongs to the ABC transporter superfamily. Phosphonates importer (TC 3.A.1.9.1) family. In terms of assembly, the complex is composed of two ATP-binding proteins (PhnC), two transmembrane proteins (PhnE) and a solute-binding protein (PhnD).

It is found in the cell inner membrane. It carries out the reaction phosphonate(out) + ATP + H2O = phosphonate(in) + ADP + phosphate + H(+). In terms of biological role, part of the ABC transporter complex PhnCDE involved in phosphonates import. Responsible for energy coupling to the transport system. This is Phosphonates import ATP-binding protein PhnC 2 from Trichodesmium erythraeum (strain IMS101).